The following is a 514-amino-acid chain: Peptide chain release factor 3 (514 aa).

The 261-residue stretch at 8–268 (KKRRTFAIIS…TFLEFAPEPH (261 aa)) folds into the tr-type G domain. Residues 17–24 (SHPDAGKT), 85–89 (DTPGH), and 139–142 (NKLD) each bind GTP.

The protein belongs to the TRAFAC class translation factor GTPase superfamily. Classic translation factor GTPase family. PrfC subfamily.

It is found in the cytoplasm. Its function is as follows. Increases the formation of ribosomal termination complexes and stimulates activities of RF-1 and RF-2. It binds guanine nucleotides and has strong preference for UGA stop codons. It may interact directly with the ribosome. The stimulation of RF-1 and RF-2 is significantly reduced by GTP and GDP, but not by GMP. In Streptococcus pyogenes serotype M5 (strain Manfredo), this protein is Peptide chain release factor 3.